We begin with the raw amino-acid sequence, 624 residues long: Probable potassium transport system protein Kup 1 (624 aa).

12 helical membrane passes run Leu10–Leu30, Leu48–Phe68, Pro94–Thr114, Leu133–Ala153, Ile159–Ile179, Phe210–Gly230, Phe242–Val262, Pro270–Ala290, Ile331–Phe351, Ile363–Ile383, Thr388–Ala408, and Phe413–Ser433.

The protein belongs to the HAK/KUP transporter (TC 2.A.72) family.

It localises to the cell inner membrane. It catalyses the reaction K(+)(in) + H(+)(in) = K(+)(out) + H(+)(out). In terms of biological role, transport of potassium into the cell. Likely operates as a K(+):H(+) symporter. The protein is Probable potassium transport system protein Kup 1 of Legionella pneumophila (strain Paris).